The following is a 220-amino-acid chain: Membrane steroid-binding protein 1 (220 aa).

The helical transmembrane segment at valine 22 to phenylalanine 42 threads the bilayer. One can recognise a Cytochrome b5 heme-binding domain in the interval glutamate 74 to lysine 171. Residues glutamate 74–lysine 171 form a steroid-binding region. Residues glycine 174–glutamate 220 are disordered. Residues glutamate 178–glycine 200 show a composition bias toward polar residues. The span at valine 203–glutamate 220 shows a compositional bias: basic and acidic residues.

This sequence belongs to the cytochrome b5 family. MAPR subfamily. Interacts with BAK1 (via extracellular region). In terms of tissue distribution, expressed in cotyledons, stems, roots, leaves, flower and silique stalks, pistils and stigmas, but not in anthers.

It localises to the cell membrane. Its subcellular location is the endosome membrane. In terms of biological role, MSBP1 can bind to multiple steroid compounds with different affinities. Negatively regulates cell elongation and brassinosteroid signaling. May act as a coreceptor with BAK1 and enhances its endocytosis. In Arabidopsis thaliana (Mouse-ear cress), this protein is Membrane steroid-binding protein 1 (MSBP1).